The sequence spans 293 residues: Probable endonuclease 4 (293 aa).

Histidine 78, histidine 118, glutamate 154, aspartate 188, histidine 191, histidine 225, aspartate 238, histidine 240, and glutamate 270 together coordinate Zn(2+).

The protein belongs to the AP endonuclease 2 family. Requires Zn(2+) as cofactor.

The enzyme catalyses Endonucleolytic cleavage to 5'-phosphooligonucleotide end-products.. Functionally, endonuclease IV plays a role in DNA repair. It cleaves phosphodiester bonds at apurinic or apyrimidinic (AP) sites, generating a 3'-hydroxyl group and a 5'-terminal sugar phosphate. The polypeptide is Probable endonuclease 4 (Vibrio vulnificus (strain CMCP6)).